Consider the following 256-residue polypeptide: DNA repair protein RecO (256 aa).

It belongs to the RecO family.

Involved in DNA repair and RecF pathway recombination. In Rhizobium etli (strain CIAT 652), this protein is DNA repair protein RecO.